A 600-amino-acid chain; its full sequence is UvrABC system protein C (600 aa).

Residues 15–100 (NSAGVYQYFN…IKQLHPKYNI (86 aa)) form the GIY-YIG domain. A UVR domain is found at 203-238 (SILIKNLEKQMLVLAQNENYEEAAKVRDQIVTIKDL).

It belongs to the UvrC family. As to quaternary structure, interacts with UvrB in an incision complex.

The protein localises to the cytoplasm. The UvrABC repair system catalyzes the recognition and processing of DNA lesions. UvrC both incises the 5' and 3' sides of the lesion. The N-terminal half is responsible for the 3' incision and the C-terminal half is responsible for the 5' incision. This Campylobacter jejuni subsp. jejuni serotype O:23/36 (strain 81-176) protein is UvrABC system protein C.